A 343-amino-acid polypeptide reads, in one-letter code: Heme A synthase (343 aa).

8 consecutive transmembrane segments (helical) span residues 13–33 (VALW…VGGA), 96–116 (HRLL…FFLI), 130–150 (VLLG…SSGL), 165–185 (LGLA…AWAG), 197–217 (GWAL…ALVA), 258–278 (LHHR…GVAA), 290–310 (LTAF…IWTL), and 311–331 (MTAV…ILLA). His-260 contributes to the heme binding site. His-322 is a heme binding site.

The protein belongs to the COX15/CtaA family. Type 2 subfamily. In terms of assembly, interacts with CtaB. The cofactor is heme b.

Its subcellular location is the cell membrane. It catalyses the reaction Fe(II)-heme o + 2 A + H2O = Fe(II)-heme a + 2 AH2. It functions in the pathway porphyrin-containing compound metabolism; heme A biosynthesis; heme A from heme O: step 1/1. Catalyzes the conversion of heme O to heme A by two successive hydroxylations of the methyl group at C8. The first hydroxylation forms heme I, the second hydroxylation results in an unstable dihydroxymethyl group, which spontaneously dehydrates, resulting in the formyl group of heme A. The sequence is that of Heme A synthase from Caulobacter sp. (strain K31).